The following is an 83-amino-acid chain: BmKBT-like peptide (83 aa).

The signal sequence occupies residues 1-19; it reads MKAALLLVISTLMLIGVLT. The region spanning 21–81 is the LCN-type CS-alpha/beta domain; that stretch reads KSGYPIQHDG…TWSRETNKCR (61 aa). 4 disulfide bridges follow: Cys31-Cys80, Cys35-Cys54, Cys41-Cys61, and Cys45-Cys63. Lys83 is a propeptide (removed by a carboxypeptidase).

The protein belongs to the long (4 C-C) scorpion toxin superfamily. Sodium channel inhibitor family. Beta subfamily. In terms of tissue distribution, expressed by the venom gland.

The protein resides in the secreted. Its function is as follows. Sodium channel inhibitor. Possesses potent toxicity in mice but induces only paralysis in cotton bollworm. The protein is BmKBT-like peptide of Olivierus martensii (Manchurian scorpion).